The sequence spans 284 residues: NAD/NADP-dependent indole-3-acetaldehyde reductase (284 aa).

Asp49 lines the NADPH pocket. Catalysis depends on proton donor residues Tyr54 and His109. 10 residues coordinate NADPH: Ser143, Gln165, Leu196, Arg201, Thr239, Thr240, Thr241, Ser242, Lys243, and Arg246.

This sequence belongs to the aldo/keto reductase family. In terms of assembly, monomer.

Its subcellular location is the cytoplasm. It is found in the nucleus. It carries out the reaction indole-3-ethanol + NAD(+) = indole-3-acetaldehyde + NADH + H(+). The enzyme catalyses indole-3-ethanol + NADP(+) = indole-3-acetaldehyde + NADPH + H(+). The sequence is that of NAD/NADP-dependent indole-3-acetaldehyde reductase from Schizosaccharomyces pombe (strain 972 / ATCC 24843) (Fission yeast).